The sequence spans 422 residues: Glutamate 2,3-aminomutase (422 aa).

Positions 150–371 (RRYPDRLIIN…AIPTYIVNAP (222 aa)) constitute a Radical SAM core domain. Positions 164, 168, and 171 each coordinate [4Fe-4S] cluster. Lys376 is subject to N6-(pyridoxal phosphate)lysine.

The protein belongs to the radical SAM superfamily. It depends on pyridoxal 5'-phosphate as a cofactor. Requires [4Fe-4S] cluster as cofactor.

The catalysed reaction is L-glutamate = 3-aminopentanedioate. Functionally, catalyzes the interconversion of L-glutamate and L-beta-glutamate. Does not have L-lysine 2,3-aminomutase activity. The chain is Glutamate 2,3-aminomutase (eam) from Clostridioides difficile (strain 630) (Peptoclostridium difficile).